The sequence spans 309 residues: Olfactory receptor 1L8 (309 aa).

Residues 1-26 lie on the Extracellular side of the membrane; it reads MERINHTSSVSEFILLGLSSRPEDQK. Asn-5 carries N-linked (GlcNAc...) asparagine glycosylation. A helical transmembrane segment spans residues 27-50; that stretch reads TLFVLFLIVYLVTITGNLLIILAI. Residues 51-58 are Cytoplasmic-facing; the sequence is RFNPHLQT. Residues 59 to 80 form a helical membrane-spanning segment; the sequence is PMYFFLSFLSLTDICFTTSVVP. The Extracellular portion of the chain corresponds to 81–101; the sequence is KMLMNFLSEKKTISYAGCLTQ. An intrachain disulfide couples Cys-98 to Cys-190. A helical transmembrane segment spans residues 102 to 121; sequence MYFLYALGNSDSCLLAVMAF. At 122-140 the chain is on the cytoplasmic side; the sequence is DRYVAVCDPFHYVTTMSHH. The chain crosses the membrane as a helical span at residues 141-159; it reads HCVLLVAFSCSFPHLHSLL. Over 160 to 197 the chain is Extracellular; sequence HTLLLNRLTFCDSNVIHHFLCDLSPVLKLSCSSIFVNE. Residues 198-220 form a helical membrane-spanning segment; sequence IVQMTEAPIVLVTRFLCIAFSYI. Over 221 to 237 the chain is Cytoplasmic; that stretch reads RILTTVLKIPSTSGKRK. Residues 238–260 traverse the membrane as a helical segment; that stretch reads AFSTCGFYLTVVTLFYGSIFCVY. Residues 261-272 lie on the Extracellular side of the membrane; the sequence is LQPPSTYAVKDH. A helical membrane pass occupies residues 273-292; that stretch reads VATIVYTVLSSMLNPFIYSL. Residues 293 to 309 lie on the Cytoplasmic side of the membrane; the sequence is RNKDLKQGLRKLMSKRS.

This sequence belongs to the G-protein coupled receptor 1 family.

It is found in the cell membrane. Odorant receptor. The sequence is that of Olfactory receptor 1L8 (OR1L8) from Homo sapiens (Human).